Here is a 23-residue protein sequence, read N- to C-terminus: Acidic phospholipase A2 CTs-A2 (23 aa).

Requires Ca(2+) as cofactor. Contains 7 disulfide bonds. Expressed by the venom gland.

It localises to the secreted. The catalysed reaction is a 1,2-diacyl-sn-glycero-3-phosphocholine + H2O = a 1-acyl-sn-glycero-3-phosphocholine + a fatty acid + H(+). Snake venom phospholipase A2 (PLA2) that shows a moderate inhibition of ADP-induced human platelet aggregation when tested on platelet rich plasma. Exhibits moderate hydrolytic activities and prefers the anionic micelles (dPPC with deoxycholate) to the zwitterionic micelles (dPPC with Triton X-100). PLA2 catalyzes the calcium-dependent hydrolysis of the 2-acyl groups in 3-sn-phosphoglycerides. The polypeptide is Acidic phospholipase A2 CTs-A2 (Trimeresurus stejnegeri (Chinese green tree viper)).